The chain runs to 1344 residues: MSGQQQATSVLVFFVNGKKVTDTNPDPECTLLTYLRDKLRLCGTKLGCAEGGCGACTVMISRMDRGQHKIRHLAVNACLTPVCAMHGCAVTTVEGIGSTRTRLHPVQERLAKAHGSQCGFCTPGIVMSMYALLRNAEQPSMRDLEVAFQGNLCRCTGYRPILEGYKTFTKEFLCGMGEKCCRVNGKGCGGGDDPESVTDDTLFERSKFQPLDASQEPIFPPELQLSNAYDSESLVFSSERVTWYRPTTLQELLQLKAAHPAAKLVVGNTEVGVEVKFKHFLYPHLINPTLVAELQEVRESEESIYFGAAVSLMEIDALLRQRIEELPEAQTRLFQCTVDMLHYFAGKQIRNVACLGGNIMTGSPISDMNPVLTAAGARLEVASIVEGKISQRTVHMGTGFFTGYRRNVIEPQEVLLGIHFQKTTPDQHVVAFKQARRRDDDIAIVNAAVNVRFEPKSNVVAEISMAFGGMAPTTVLAPRTSQLMVKQPLDHQLLERVAESLCGELPLAASAPGGMIAYRRALVVSLIFKAYLAISSKLSEAGIIAGDAIPPKERSGAELFHTPTLRSAQLFERVCSDQPVCDPIGRPEVHAAALKQATGEAIYTDDIPRMDGELYLGFVLSTKPRAKITKLDASAALALEGVHAFFSHKDLTVHENEVGPVFHDEHVFAAGEVHCYGQIVGAVAADNKALAQRASRLVRVEYEDLSPVIVTIEQAIEHGSYFPDYPRYVTKGNMAEAFAQAEHTYEGSCRMGGQEHFYLETHAAVAVPRDSDELELFCSTQHPSEVQKLVAHVTSLPAHRVVCRAKRLGGGFGGKESRGISVALPVALAAYRLRRPVRCMLDRDEDMLITGTRHPFLFKYKVAFSSDGLITACDIECYNNAGWSMDLSFSVLERAMYHFENCYHIPNVRVGGWVCKTNLPSNTAFRGFGGPQGMFAGEHIIRDVARIVGRDVLDVMRLNFYRTGDTTHYNQQLEHFPIERCLDDCLTQSRYHERRAEIAKFNRENRWRKRGVAVIPTKYGIAFGVMHLNQAGALLNVYGDGSVLLSHGGVEIGQGLNTKMIQCAARALGIPSELIHISETATDKVPNTSPTAASVGSDINGMAVLDACEKLNKRLAPIKEALPQATWQEWINKAYFDRVSLSATGFYAMPGIGYHPETNPNARTYSYYTNGVGISVVEIDCLTGDHQVLSTDIVMDIGSSINPAIDIGQIEGAFMQGYGLFTLEELMYSPQGMLYSRGPGMYKLPGFADIPGEFNVSLLTGAPNPRAVYSSKAVGEPPLFIGASAFFAIKEAIAAARQEHGLTGDFPLEAPSTSARIRMACQDKFTNLLEVPEAGSFTPWNIVP.

The 2Fe-2S ferredoxin-type domain maps to 9–96 (SVLVFFVNGK…GCAVTTVEGI (88 aa)). Residues Cys48, Cys53, Cys56, Cys78, Cys118, Cys121, Cys153, and Cys155 each contribute to the [2Fe-2S] cluster site. Residues 236–425 (FSSERVTWYR…LGIHFQKTTP (190 aa)) enclose the FAD-binding PCMH-type domain. FAD-binding positions include 264–271 (LVVGNTEV), Phe344, 354–358 (CLGGN), Asp367, Leu415, and Lys433. Gln781 and Phe812 together coordinate Mo-molybdopterin. The substrate site is built by Glu816 and Arg894. Residue Arg926 coordinates Mo-molybdopterin. Residue Phe928 coordinates substrate. Ala1093 is a binding site for Mo-molybdopterin. The active-site Proton acceptor is the Glu1276.

It belongs to the xanthine dehydrogenase family. As to quaternary structure, homodimer. It depends on FAD as a cofactor. The cofactor is Mo-molybdopterin. [2Fe-2S] cluster is required as a cofactor.

The protein resides in the peroxisome. The enzyme catalyses xanthine + NAD(+) + H2O = urate + NADH + H(+). It carries out the reaction hypoxanthine + NAD(+) + H2O = xanthine + NADH + H(+). Key enzyme in purine degradation. Catalyzes the oxidation of hypoxanthine to xanthine. Catalyzes the oxidation of xanthine to uric acid. The protein is Xanthine dehydrogenase (Xdh) of Drosophila subobscura (Fruit fly).